The following is a 938-amino-acid chain: Isoleucine--tRNA ligase (938 aa).

Residues 58–68 (PYANGNIHIGH) carry the 'HIGH' region motif. Glu-561 is an L-isoleucyl-5'-AMP binding site. A 'KMSKS' region motif is present at residues 602-606 (KMSKS). Lys-605 contacts ATP. Cys-901, Cys-904, Cys-921, and Cys-924 together coordinate Zn(2+).

Belongs to the class-I aminoacyl-tRNA synthetase family. IleS type 1 subfamily. In terms of assembly, monomer. Zn(2+) serves as cofactor.

Its subcellular location is the cytoplasm. It carries out the reaction tRNA(Ile) + L-isoleucine + ATP = L-isoleucyl-tRNA(Ile) + AMP + diphosphate. Catalyzes the attachment of isoleucine to tRNA(Ile). As IleRS can inadvertently accommodate and process structurally similar amino acids such as valine, to avoid such errors it has two additional distinct tRNA(Ile)-dependent editing activities. One activity is designated as 'pretransfer' editing and involves the hydrolysis of activated Val-AMP. The other activity is designated 'posttransfer' editing and involves deacylation of mischarged Val-tRNA(Ile). This chain is Isoleucine--tRNA ligase, found in Yersinia enterocolitica serotype O:8 / biotype 1B (strain NCTC 13174 / 8081).